The sequence spans 219 residues: ATP-dependent Clp protease proteolytic subunit 4 (219 aa).

The active-site Nucleophile is Ser125. His150 is an active-site residue.

It belongs to the peptidase S14 family. As to quaternary structure, fourteen ClpP subunits assemble into 2 heptameric rings which stack back to back to give a disk-like structure with a central cavity, resembling the structure of eukaryotic proteasomes.

It localises to the cytoplasm. The enzyme catalyses Hydrolysis of proteins to small peptides in the presence of ATP and magnesium. alpha-casein is the usual test substrate. In the absence of ATP, only oligopeptides shorter than five residues are hydrolyzed (such as succinyl-Leu-Tyr-|-NHMec, and Leu-Tyr-Leu-|-Tyr-Trp, in which cleavage of the -Tyr-|-Leu- and -Tyr-|-Trp bonds also occurs).. Its function is as follows. Cleaves peptides in various proteins in a process that requires ATP hydrolysis. Has a chymotrypsin-like activity. Plays a major role in the degradation of misfolded proteins. The chain is ATP-dependent Clp protease proteolytic subunit 4 from Prochlorococcus marinus (strain MIT 9312).